Consider the following 344-residue polypeptide: NAD-dependent alcohol dehydrogenase (344 aa).

The Zn(2+) site is built by Cys-38, His-66, Asp-96, Cys-99, Cys-102, Cys-110, and Cys-152.

This sequence belongs to the zinc-containing alcohol dehydrogenase family. As to quaternary structure, homodimer and homotetramer. Zn(2+) serves as cofactor.

It carries out the reaction a primary alcohol + NAD(+) = an aldehyde + NADH + H(+). It catalyses the reaction a secondary alcohol + NAD(+) = a ketone + NADH + H(+). The protein is NAD-dependent alcohol dehydrogenase (adh) of Sulfolobus acidocaldarius (strain ATCC 33909 / DSM 639 / JCM 8929 / NBRC 15157 / NCIMB 11770).